Reading from the N-terminus, the 827-residue chain is MASSEAEWVTIANNLLFKCHIHLRIHELQDCDANVFIALYQSILGEKVPDLIVLPRNQEDEAHNVQAVIDSLALDYLQVSLSHITGENIVKGDNESIRNLLEIFDGLLDYLTEHISESSPNKSETEQYSKDSHGEEAGEDLERTEEAKWRNASFMRCSFSSDTLGPTWDEDEAESTGEIIRLGDTAHTFSQRSNGAQNSKDLRSRKASASPGVEPPEEMLNPGPLGFLSQNGPPCEAASETPPMSMVPSARKLGEPIRAAIPLHPPYHPSEPRAPCPIGKEYLWSSRYLSTPTSGEHMAPSVEPDDAFLTSTLFKDDDQETYLPKPEATRTRKPSKGERDENRAAIPSEHLPFSQKARKPLTEQELHAMSEKLSQRLSELDWMLKTALGDRGTGETDGNDGDGGGEEVRSGNEEMLSQHSDSVMEYGPKKPRPGFSTCRKAPYRSHSLSPSSVNKHRQLEKEKKRQHKSKGTDSCHFQAKALTEAFERELRKHKVQENVGLRGIREEEEEEEETGKSYREVVPKGTSKRSQVQKTYSRKTAAPSPKGDGRLKSSKASPMKVSEHSLLSLMLEQFPFLYVSDPTLTKMWKQQMAQVEQLKREAQRENRSKKKLQDEIEEALRRHDLLTALVKKEYDHNKRLQDFRDRIQRQRLTQSKIKENRHQSVRARKYYDDYRVQLRAKMMKMRTREEMIFKKLFEEGLQIQKQRLRDLRNYAKEKRNEEKRQHQNELDSMENHYKDQFSLLAEAISQERQELKVRQKFQAQTLHKVKRELRAKMEKEIQQLQHMITQNDDDAFFRELEAERFKARLQLASFQYSKNPFPRGQTS.

Disordered stretches follow at residues 115–145 (ISES…ERTE), 183–249 (GDTA…MVPS), 308–372 (FLTS…MSEK), 388–476 (LGDR…DSCH), and 489–558 (ELRK…KASP). Residues 123-145 (SETEQYSKDSHGEEAGEDLERTE) show a composition bias toward basic and acidic residues. Over residues 187–199 (HTFSQRSNGAQNS) the composition is skewed to polar residues. Basic and acidic residues-rich tracts occupy residues 327–343 (EATR…DENR) and 360–372 (PLTE…MSEK). Phosphoserine is present on residues Ser-447, Ser-449, and Ser-451. Coiled coils occupy residues 584-633 (LTKM…VKKE) and 701-795 (LQIQ…DDDA).

It is found in the cytoplasm. The protein resides in the cytoskeleton. It localises to the microtubule organizing center. Its subcellular location is the centrosome. The protein localises to the spindle pole. This is Centrosomal protein of 95 kDa (Cep95) from Mus musculus (Mouse).